Reading from the N-terminus, the 180-residue chain is Cytidylate kinase (180 aa).

7–15 (GLPGSGTTT) contributes to the ATP binding site.

It belongs to the cytidylate kinase family. Type 2 subfamily.

It is found in the cytoplasm. It catalyses the reaction CMP + ATP = CDP + ADP. It carries out the reaction dCMP + ATP = dCDP + ADP. The chain is Cytidylate kinase from Methanosarcina acetivorans (strain ATCC 35395 / DSM 2834 / JCM 12185 / C2A).